A 937-amino-acid polypeptide reads, in one-letter code: uncharacterized protein (937 aa).

At Thr2 the chain carries N-acetylthreonine. Positions 281-937 (NESPSSNINT…KKGKGKGGRK (657 aa)) are disordered. Low complexity predominate over residues 290–308 (TTTTSTTTTTTTTTSSPVV). The active-site Charge relay system is the Thr292. Basic and acidic residues-rich tracts occupy residues 309–402 (EESK…EKQQ), 411–431 (AEKE…RLEA), 469–489 (AEKE…KLEA), 512–532 (AEKE…KLEA), 600–615 (AEKE…KLEA), 667–687 (AEKE…KLEA), 738–758 (AEKE…RLEA), and 780–872 (AEKE…KVEE). Residues 345 to 802 (VDDSKEKEEK…KAAEETKVEE (458 aa)) adopt a coiled-coil conformation. Acidic residues predominate over residues 887 to 897 (EETEEGEEVDE). A compositionally biased stretch (low complexity) spans 898–924 (ASNTTTEQTTTNANQPKKPNNNNNNNK). Residues 925–937 (GKGKKGKGKGGRK) are compositionally biased toward basic residues.

Belongs to the AB hydrolase superfamily.

This is an uncharacterized protein from Dictyostelium discoideum (Social amoeba).